The following is a 303-amino-acid chain: Zinc import ATP-binding protein ZnuC (303 aa).

The region spanning V17 to R232 is the ABC transporter domain. Residue G49 to S56 coordinates ATP. The segment at D263–A303 is disordered.

Belongs to the ABC transporter superfamily. Zinc importer (TC 3.A.1.15.5) family. As to quaternary structure, the complex is composed of two ATP-binding proteins (ZnuC), two transmembrane proteins (ZnuB) and a solute-binding protein (ZnuA).

The protein resides in the cell inner membrane. The catalysed reaction is Zn(2+)(out) + ATP(in) + H2O(in) = Zn(2+)(in) + ADP(in) + phosphate(in) + H(+)(in). Functionally, part of the ABC transporter complex ZnuABC involved in zinc import. Responsible for energy coupling to the transport system. The polypeptide is Zinc import ATP-binding protein ZnuC (Rhizobium johnstonii (strain DSM 114642 / LMG 32736 / 3841) (Rhizobium leguminosarum bv. viciae)).